Here is a 473-residue protein sequence, read N- to C-terminus: 3-isopropylmalate dehydratase large subunit 2 (473 aa).

Residues Cys350, Cys410, and Cys413 each contribute to the [4Fe-4S] cluster site.

It belongs to the aconitase/IPM isomerase family. LeuC type 1 subfamily. Heterodimer of LeuC and LeuD. [4Fe-4S] cluster serves as cofactor.

It carries out the reaction (2R,3S)-3-isopropylmalate = (2S)-2-isopropylmalate. It functions in the pathway amino-acid biosynthesis; L-leucine biosynthesis; L-leucine from 3-methyl-2-oxobutanoate: step 2/4. Its function is as follows. Catalyzes the isomerization between 2-isopropylmalate and 3-isopropylmalate, via the formation of 2-isopropylmaleate. The sequence is that of 3-isopropylmalate dehydratase large subunit 2 from Salmonella typhimurium (strain LT2 / SGSC1412 / ATCC 700720).